A 426-amino-acid polypeptide reads, in one-letter code: 3-phosphoshikimate 1-carboxyvinyltransferase (426 aa).

3-phosphoshikimate is bound by residues lysine 22, serine 23, and arginine 27. Lysine 22 serves as a coordination point for phosphoenolpyruvate. 2 residues coordinate phosphoenolpyruvate: glycine 96 and arginine 124. The 3-phosphoshikimate site is built by serine 170, serine 171, glutamine 172, serine 198, aspartate 314, asparagine 337, and lysine 341. Residue glutamine 172 coordinates phosphoenolpyruvate. The active-site Proton acceptor is the aspartate 314. 3 residues coordinate phosphoenolpyruvate: arginine 345, arginine 387, and lysine 412.

The protein belongs to the EPSP synthase family. In terms of assembly, monomer.

The protein localises to the cytoplasm. It carries out the reaction 3-phosphoshikimate + phosphoenolpyruvate = 5-O-(1-carboxyvinyl)-3-phosphoshikimate + phosphate. It functions in the pathway metabolic intermediate biosynthesis; chorismate biosynthesis; chorismate from D-erythrose 4-phosphate and phosphoenolpyruvate: step 6/7. In terms of biological role, catalyzes the transfer of the enolpyruvyl moiety of phosphoenolpyruvate (PEP) to the 5-hydroxyl of shikimate-3-phosphate (S3P) to produce enolpyruvyl shikimate-3-phosphate and inorganic phosphate. This chain is 3-phosphoshikimate 1-carboxyvinyltransferase, found in Shewanella oneidensis (strain ATCC 700550 / JCM 31522 / CIP 106686 / LMG 19005 / NCIMB 14063 / MR-1).